Consider the following 445-residue polypeptide: UPF0210 protein SP_0239 (445 aa).

Belongs to the UPF0210 family. Homodimer.

The protein is UPF0210 protein SP_0239 of Streptococcus pneumoniae serotype 4 (strain ATCC BAA-334 / TIGR4).